An 894-amino-acid chain; its full sequence is Microsomal triglyceride transfer protein large subunit (894 aa).

An N-terminal signal peptide occupies residues 1–21; sequence MILLAVLFLCFFSSYSASVKG. Residues 28–658 form the Vitellogenin domain; the sequence is LNNERLYKLT…IFQYIGKAEL (631 aa). The cysteines at positions 174 and 194 are disulfide-linked.

Interacts with PRAP1. As to quaternary structure, heterodimer; heterodimerizes with the protein disulfide isomerase (P4HB/PDI). Interacts with APOB. In terms of assembly, heterodimer; heterodimerizes with the protein disulfide isomerase (P4HB/PDI). In terms of processing, cleaved by signal peptidase between residues Gln-33 and Asn-34. In terms of tissue distribution, mainly expressed in the intestine and the liver, and at lower levels in white and brown fat cells. Expressed in heart. Ubiquitous, and is the major isoform in hematopoietic cells and adipocytes.

Its subcellular location is the endoplasmic reticulum. It is found in the golgi apparatus. It catalyses the reaction a 1,2-diacyl-sn-glycero-3-phosphocholine(in) = a 1,2-diacyl-sn-glycero-3-phosphocholine(out). It carries out the reaction a 1,2-diacyl-sn-glycero-3-phosphoethanolamine(in) = a 1,2-diacyl-sn-glycero-3-phosphoethanolamine(out). The enzyme catalyses a cholesterol ester(in) = a cholesterol ester(out). The catalysed reaction is a triacyl-sn-glycerol(in) = a triacyl-sn-glycerol(out). Catalyzes the transport of triglyceride, cholesteryl ester, and phospholipid between phospholipid surfaces. Required for the assembly and secretion of plasma lipoproteins that contain apolipoprotein B. May be involved in regulating cholesteryl ester biosynthesis in cells that produce lipoproteins. In terms of biological role, critical for the development of natural killer T (NKT) cells. Required for the assembly and secretion of plasma lipoproteins that contain apolipoprotein B. In Mus musculus (Mouse), this protein is Microsomal triglyceride transfer protein large subunit (Mttp).